A 379-amino-acid polypeptide reads, in one-letter code: Guanine nucleotide-binding protein G(s) subunit alpha (379 aa).

A disordered region spans residues 1 to 29; it reads MGCFGSAGAKGDAEENKKRKEANKNINKQ. Gly2 is lipidated: N-palmitoyl glycine. Residue Cys3 is the site of S-palmitoyl cysteine attachment. One can recognise a G-alpha domain in the interval 39–379; it reads ATHRLLLLGA…RMHLRQYELL (341 aa). Positions 42–55 are G1 motif; the sequence is RLLLLGAGESGKST. GTP-binding positions include 47–54, 183–189, 208–212, 277–280, and Ala351; these read GAGESGKS, LRCRVLT, DVGGQ, and NKQD. The Mg(2+) site is built by Ser54 and Thr189. The interval 181–189 is G2 motif; that stretch reads DILRCRVLT. The interval 204–213 is G3 motif; the sequence is FHMFDVGGQR. Residues 273–280 are G4 motif; it reads ILFLNKQD. The segment at 349–354 is G5 motif; sequence TCAVDT.

The protein belongs to the G-alpha family. G(s) subfamily. As to quaternary structure, g proteins are composed of 3 units; alpha, beta and gamma. The alpha chain contains the guanine nucleotide binding site.

Functionally, guanine nucleotide-binding proteins (G proteins) are involved as modulators or transducers in various transmembrane signaling systems. The G(s) protein is involved in hormonal regulation of adenylate cyclase: it activates the cyclase in response to beta-adrenergic stimuli. This chain is Guanine nucleotide-binding protein G(s) subunit alpha, found in Homarus americanus (American lobster).